The sequence spans 933 residues: uncharacterized protein (933 aa).

A compositionally biased stretch (polar residues) spans 1–28 (MNGNLPHIQIQSPKNSLDHLNNGRQATH). Disordered stretches follow at residues 1–135 (MNGN…GESD), 173–194 (MDNESSEEERDGIPRVEGNAAD), and 252–275 (ATDFPNLAHESSEPSSSRHTADAQ). The span at 29–47 (NFEHGKPGDREEANGHADA) shows a compositional bias: basic and acidic residues. Low complexity predominate over residues 49–59 (SSSGRSRYLSS). 2 stretches are compositionally biased toward polar residues: residues 87-101 (TLSFLNPSRASSNTH) and 108-135 (NRSSNVTRTVSGRKSNHGSSLTDTGESD). Residues 173–182 (MDNESSEEER) show a composition bias toward acidic residues. Residues 264–275 (EPSSSRHTADAQ) show a composition bias toward polar residues. 8 WD repeats span residues 314-353 (SSNNAIWAMKFSRDGRYLAVGGQDRILRIWAVLDSEHARS), 385-423 (GHTADILDLSWSRNNFLLSSSMDKTARLWHPVRKDCLCC), 425-465 (EHSD…VSFW), 467-506 (ELPELITAVAFSPDGGLAIAGTFVGLCLFYDTRGLRFRTQ), 517-563 (AKGS…LELK), 568-607 (ANAQSQNRAYFDDDGNYVICGSEDHQVFIWDLPPQHMHKT), 617-657 (ASVR…SVIS), and 665-710 (PSLR…AARK). At S722 the chain carries Phosphoserine. Residues 756-796 (NASQITNNENNGNDDIKKGDEPEEEHVGLRKNSTQEKNANL) form a disordered region. The span at 757-768 (ASQITNNENNGN) shows a compositional bias: polar residues. A compositionally biased stretch (basic and acidic residues) spans 769–783 (DDIKKGDEPEEEHVG).

It is found in the endoplasmic reticulum. Its subcellular location is the nucleus. This is an uncharacterized protein from Schizosaccharomyces pombe (strain 972 / ATCC 24843) (Fission yeast).